The sequence spans 341 residues: Shk1 kinase-binding protein 15 (341 aa).

WD repeat units lie at residues 33 to 70 (AHEG…QIAD), 77 to 114 (IANA…LVHT), 119 to 157 (SHKG…GGKV), 197 to 234 (SSKS…ILHE), and 237 to 274 (AHKK…VIEH). Positions 293–341 (NSEPKNVEDEAAKRQSLDSETSETSSESESESEYYSTSKQPPVKRTKHA) are disordered. Over residues 297-309 (KNVEDEAAKRQSL) the composition is skewed to basic and acidic residues.

Its function is as follows. Negatively regulates pak1/shk1 kinase activity leading to proper execution of cytoskeletal remodeling and cytokinetic functions. Interacts with pak1/shk1. The polypeptide is Shk1 kinase-binding protein 15 (skb15) (Schizosaccharomyces pombe (strain 972 / ATCC 24843) (Fission yeast)).